The sequence spans 214 residues: MSSHLNGIGNIVPMVVEQSGMGERAFDIYSRLLRERIIFLGTPIDDAVANTIVAQLLFLDAEDSEKDIQLYINSPGGSVYAGMAIYDTIQQIRPDVVTICFGLAASMGAFLLTAGTKGKRMSLPDSRIMIHQPLGGAQGQAIDIEIQAREILYIKAQLNQLLANHTGQPLERIEADTDRDFFMSAEEAKNYGLIDQVISRQNLPTAGENVTIVK.

S106 acts as the Nucleophile in catalysis. H131 is a catalytic residue.

Belongs to the peptidase S14 family. As to quaternary structure, fourteen ClpP subunits assemble into 2 heptameric rings which stack back to back to give a disk-like structure with a central cavity, resembling the structure of eukaryotic proteasomes.

The protein localises to the cytoplasm. It catalyses the reaction Hydrolysis of proteins to small peptides in the presence of ATP and magnesium. alpha-casein is the usual test substrate. In the absence of ATP, only oligopeptides shorter than five residues are hydrolyzed (such as succinyl-Leu-Tyr-|-NHMec, and Leu-Tyr-Leu-|-Tyr-Trp, in which cleavage of the -Tyr-|-Leu- and -Tyr-|-Trp bonds also occurs).. Functionally, cleaves peptides in various proteins in a process that requires ATP hydrolysis. Has a chymotrypsin-like activity. Plays a major role in the degradation of misfolded proteins. The chain is ATP-dependent Clp protease proteolytic subunit 3 from Trichormus variabilis (strain ATCC 29413 / PCC 7937) (Anabaena variabilis).